The following is a 402-amino-acid chain: tRNA(Met) cytidine acetate ligase (402 aa).

ATP is bound by residues isoleucine 7–histidine 20, glycine 102, asparagine 171, and arginine 196.

This sequence belongs to the TmcAL family.

The protein localises to the cytoplasm. It catalyses the reaction cytidine(34) in elongator tRNA(Met) + acetate + ATP = N(4)-acetylcytidine(34) in elongator tRNA(Met) + AMP + diphosphate. Functionally, catalyzes the formation of N(4)-acetylcytidine (ac(4)C) at the wobble position of elongator tRNA(Met), using acetate and ATP as substrates. First activates an acetate ion to form acetyladenylate (Ac-AMP) and then transfers the acetyl group to tRNA to form ac(4)C34. This is tRNA(Met) cytidine acetate ligase from Clostridium perfringens (strain SM101 / Type A).